The following is a 430-amino-acid chain: Serine--tRNA ligase (430 aa).

237–239 (TAE) lines the L-serine pocket. Position 268-270 (268-270 (RSE)) interacts with ATP. L-serine is bound at residue E291. 355–358 (EISS) is an ATP binding site. S391 contributes to the L-serine binding site.

The protein belongs to the class-II aminoacyl-tRNA synthetase family. Type-1 seryl-tRNA synthetase subfamily. Homodimer. The tRNA molecule binds across the dimer.

It localises to the cytoplasm. The catalysed reaction is tRNA(Ser) + L-serine + ATP = L-seryl-tRNA(Ser) + AMP + diphosphate + H(+). It carries out the reaction tRNA(Sec) + L-serine + ATP = L-seryl-tRNA(Sec) + AMP + diphosphate + H(+). It functions in the pathway aminoacyl-tRNA biosynthesis; selenocysteinyl-tRNA(Sec) biosynthesis; L-seryl-tRNA(Sec) from L-serine and tRNA(Sec): step 1/1. Functionally, catalyzes the attachment of serine to tRNA(Ser). Is also able to aminoacylate tRNA(Sec) with serine, to form the misacylated tRNA L-seryl-tRNA(Sec), which will be further converted into selenocysteinyl-tRNA(Sec). This chain is Serine--tRNA ligase, found in Salmonella schwarzengrund (strain CVM19633).